Reading from the N-terminus, the 312-residue chain is Protoheme IX farnesyltransferase 2 (312 aa).

8 consecutive transmembrane segments (helical) span residues 31–51 (VMSL…GHIH), 52–72 (PVLG…SGAL), 119–139 (ALVN…YVVI), 152–172 (IVIG…AATG), 179–199 (LLLF…LALF), 225–245 (ILLY…LGYF), 247–267 (WVYG…AIEV), and 283–303 (LFAF…LDVV).

Belongs to the UbiA prenyltransferase family. Protoheme IX farnesyltransferase subfamily.

The protein localises to the cell inner membrane. The catalysed reaction is heme b + (2E,6E)-farnesyl diphosphate + H2O = Fe(II)-heme o + diphosphate. The protein operates within porphyrin-containing compound metabolism; heme O biosynthesis; heme O from protoheme: step 1/1. Its function is as follows. Converts heme B (protoheme IX) to heme O by substitution of the vinyl group on carbon 2 of heme B porphyrin ring with a hydroxyethyl farnesyl side group. This chain is Protoheme IX farnesyltransferase 2, found in Nitrobacter winogradskyi (strain ATCC 25391 / DSM 10237 / CIP 104748 / NCIMB 11846 / Nb-255).